The sequence spans 398 residues: Digeranylgeranylglycerophospholipid reductase (398 aa).

Residues A15, E34, C45, A46, G48, R99, A123, D280, G292, and I293 each coordinate FAD. Residue V372 participates in a 2,3-bis-O-(geranylgeranyl)-sn-glycerol 1-phospholipid binding.

Belongs to the geranylgeranyl reductase family. DGGGPL reductase subfamily. FAD is required as a cofactor.

It catalyses the reaction a 2,3-bis-O-phytanyl-sn-glycerol 1-phospholipid + 8 oxidized 2[4Fe-4S]-[ferredoxin] = a 2,3-bis-O-(geranylgeranyl)-sn-glycerol 1-phospholipid + 8 reduced 2[4Fe-4S]-[ferredoxin] + 16 H(+). The catalysed reaction is 2,3-bis-O-(phytanyl)-sn-glycerol 1-phosphate + 8 oxidized 2[4Fe-4S]-[ferredoxin] = 2,3-bis-O-(geranylgeranyl)-sn-glycerol 1-phosphate + 8 reduced 2[4Fe-4S]-[ferredoxin] + 16 H(+). It carries out the reaction a 2,3-bis-O-phytanyl-sn-glycerol 1-phospholipid + 8 A = a 2,3-bis-O-(geranylgeranyl)-sn-glycerol 1-phospholipid + 8 AH2. The enzyme catalyses CDP-2,3-bis-O-(geranylgeranyl)-sn-glycerol + 8 AH2 = CDP-2,3-bis-O-(phytanyl)-sn-glycerol + 8 A. It catalyses the reaction archaetidylserine + 8 AH2 = 2,3-bis-O-phytanyl-sn-glycero-3-phospho-L-serine + 8 A. It participates in membrane lipid metabolism; glycerophospholipid metabolism. Functionally, is involved in the reduction of 2,3-digeranylgeranylglycerophospholipids (unsaturated archaeols) into 2,3-diphytanylglycerophospholipids (saturated archaeols) in the biosynthesis of archaeal membrane lipids. Catalyzes the formation of archaetidic acid (2,3-di-O-phytanyl-sn-glyceryl phosphate) from 2,3-di-O-geranylgeranylglyceryl phosphate (DGGGP) via the hydrogenation of each double bond of the isoprenoid chains. Is also probably able to reduce double bonds of geranyl groups in CDP-2,3-bis-O-(geranylgeranyl)-sn-glycerol and archaetidylserine, thus acting at various stages in the biosynthesis of archaeal membrane lipids. The chain is Digeranylgeranylglycerophospholipid reductase from Methanoculleus marisnigri (strain ATCC 35101 / DSM 1498 / JR1).